The following is a 242-amino-acid chain: Zinc import ATP-binding protein ZnuC (242 aa).

The ABC transporter domain maps to 24 to 241 (INVKNLSFFY…EKFLKMFSSY (218 aa)). 56–63 (GPNGGGKT) contacts ATP.

Belongs to the ABC transporter superfamily. Zinc importer (TC 3.A.1.15.5) family. As to quaternary structure, the complex is composed of two ATP-binding proteins (ZnuC), two transmembrane proteins (ZnuB) and a solute-binding protein (ZnuA).

The protein resides in the cell inner membrane. It catalyses the reaction Zn(2+)(out) + ATP(in) + H2O(in) = Zn(2+)(in) + ADP(in) + phosphate(in) + H(+)(in). Functionally, part of the ABC transporter complex ZnuABC involved in zinc import. Responsible for energy coupling to the transport system. The polypeptide is Zinc import ATP-binding protein ZnuC (Ehrlichia canis (strain Jake)).